A 107-amino-acid polypeptide reads, in one-letter code: Large ribosomal subunit protein uL24 (107 aa).

The protein belongs to the universal ribosomal protein uL24 family. In terms of assembly, part of the 50S ribosomal subunit.

One of two assembly initiator proteins, it binds directly to the 5'-end of the 23S rRNA, where it nucleates assembly of the 50S subunit. In terms of biological role, one of the proteins that surrounds the polypeptide exit tunnel on the outside of the subunit. The sequence is that of Large ribosomal subunit protein uL24 from Nitratidesulfovibrio vulgaris (strain DSM 19637 / Miyazaki F) (Desulfovibrio vulgaris).